A 291-amino-acid chain; its full sequence is Acetyl-coenzyme A carboxylase carboxyl transferase subunit beta (291 aa).

The 263-residue stretch at 29–291 (LWSKCPECGE…MHQQPAAVSA (263 aa)) folds into the CoA carboxyltransferase N-terminal domain. Positions 33, 36, 52, and 55 each coordinate Zn(2+). The segment at 33-55 (CPECGEVVYRKDLIANASVCASC) adopts a C4-type zinc-finger fold.

It belongs to the AccD/PCCB family. As to quaternary structure, acetyl-CoA carboxylase is a heterohexamer composed of biotin carboxyl carrier protein (AccB), biotin carboxylase (AccC) and two subunits each of ACCase subunit alpha (AccA) and ACCase subunit beta (AccD). Zn(2+) serves as cofactor.

The protein localises to the cytoplasm. It carries out the reaction N(6)-carboxybiotinyl-L-lysyl-[protein] + acetyl-CoA = N(6)-biotinyl-L-lysyl-[protein] + malonyl-CoA. Its pathway is lipid metabolism; malonyl-CoA biosynthesis; malonyl-CoA from acetyl-CoA: step 1/1. Functionally, component of the acetyl coenzyme A carboxylase (ACC) complex. Biotin carboxylase (BC) catalyzes the carboxylation of biotin on its carrier protein (BCCP) and then the CO(2) group is transferred by the transcarboxylase to acetyl-CoA to form malonyl-CoA. The chain is Acetyl-coenzyme A carboxylase carboxyl transferase subunit beta from Synechococcus sp. (strain RCC307).